The sequence spans 499 residues: Salviol synthase (499 aa).

A helical membrane pass occupies residues 4–24 (HIPSLVLCISFFIFFKIVSKL). Cysteine 436 contacts heme.

The protein belongs to the cytochrome P450 family. Heme serves as cofactor. In terms of tissue distribution, expressed in leaf glandular trichomes.

Its subcellular location is the membrane. The catalysed reaction is ferruginol + reduced [NADPH--hemoprotein reductase] + O2 = salviol + oxidized [NADPH--hemoprotein reductase] + H2O + H(+). The protein operates within secondary metabolite biosynthesis; terpenoid biosynthesis. Its function is as follows. Monooxygenase involved in the biosynthesis of labdane-related diterpenes natural products. Catalyzes the oxidation of ferruginol to produce salviol. Salviol is an intermediate in the biosynthesis of carnosate, a potent antioxidant. The protein is Salviol synthase of Salvia pomifera (Apple sage).